The primary structure comprises 110 residues: UPF0122 protein SERP0802 (110 aa).

The protein belongs to the UPF0122 family.

Functionally, might take part in the signal recognition particle (SRP) pathway. This is inferred from the conservation of its genetic proximity to ftsY/ffh. May be a regulatory protein. This is UPF0122 protein SERP0802 from Staphylococcus epidermidis (strain ATCC 35984 / DSM 28319 / BCRC 17069 / CCUG 31568 / BM 3577 / RP62A).